We begin with the raw amino-acid sequence, 109 residues long: Tyrosine-protein phosphatase 6 (109 aa).

The 109-residue stretch at 1–109 (YNINVIVMVC…SEDETTPLCV (109 aa)) folds into the Tyrosine-protein phosphatase domain. Residue Asp-76 participates in substrate binding.

The protein belongs to the protein-tyrosine phosphatase family.

The enzyme catalyses O-phospho-L-tyrosyl-[protein] + H2O = L-tyrosyl-[protein] + phosphate. This is Tyrosine-protein phosphatase 6 (STY-6) from Styela plicata (Wrinkled sea squirt).